Consider the following 347-residue polypeptide: Uroporphyrinogen decarboxylase (347 aa).

Residues 24-28 (RQAGR), F42, D73, Y150, T205, and H320 each bind substrate.

Belongs to the uroporphyrinogen decarboxylase family. Homodimer.

The protein resides in the cytoplasm. The catalysed reaction is uroporphyrinogen III + 4 H(+) = coproporphyrinogen III + 4 CO2. Its pathway is porphyrin-containing compound metabolism; protoporphyrin-IX biosynthesis; coproporphyrinogen-III from 5-aminolevulinate: step 4/4. In terms of biological role, catalyzes the decarboxylation of four acetate groups of uroporphyrinogen-III to yield coproporphyrinogen-III. This chain is Uroporphyrinogen decarboxylase, found in Gloeobacter violaceus (strain ATCC 29082 / PCC 7421).